The chain runs to 298 residues: Protoheme IX farnesyltransferase (298 aa).

The next 9 membrane-spanning stretches (helical) occupy residues 26-46 (VVSL…PGAV), 52-72 (IFGT…NCLV), 93-113 (VSVP…LFML), 120-140 (LTMW…TVIL), 148-168 (IVIG…AVTG), 174-194 (ALLL…ALAL), 219-239 (LHVL…YLTQ), 241-261 (SGLI…YYAI), and 278-298 (YSIA…YFYF).

It belongs to the UbiA prenyltransferase family. Protoheme IX farnesyltransferase subfamily.

The protein resides in the cell inner membrane. The catalysed reaction is heme b + (2E,6E)-farnesyl diphosphate + H2O = Fe(II)-heme o + diphosphate. Its pathway is porphyrin-containing compound metabolism; heme O biosynthesis; heme O from protoheme: step 1/1. Converts heme B (protoheme IX) to heme O by substitution of the vinyl group on carbon 2 of heme B porphyrin ring with a hydroxyethyl farnesyl side group. This chain is Protoheme IX farnesyltransferase, found in Nitrosomonas europaea (strain ATCC 19718 / CIP 103999 / KCTC 2705 / NBRC 14298).